Reading from the N-terminus, the 186-residue chain is Peptide deformylase (186 aa).

Fe cation contacts are provided by Cys99 and His141. Residue Glu142 is part of the active site. Position 145 (His145) interacts with Fe cation.

The protein belongs to the polypeptide deformylase family. Requires Fe(2+) as cofactor.

The catalysed reaction is N-terminal N-formyl-L-methionyl-[peptide] + H2O = N-terminal L-methionyl-[peptide] + formate. In terms of biological role, removes the formyl group from the N-terminal Met of newly synthesized proteins. Requires at least a dipeptide for an efficient rate of reaction. N-terminal L-methionine is a prerequisite for activity but the enzyme has broad specificity at other positions. This chain is Peptide deformylase, found in Chlamydia felis (strain Fe/C-56) (Chlamydophila felis).